The chain runs to 163 residues: Nucleotide-binding protein BPUM_1028 (163 aa).

This sequence belongs to the YajQ family.

Functionally, nucleotide-binding protein. This chain is Nucleotide-binding protein BPUM_1028, found in Bacillus pumilus (strain SAFR-032).